The sequence spans 288 residues: Protease HtpX homolog (288 aa).

The next 2 helical transmembrane spans lie at 1–21 (MHTIKTVLLLGVLTGLFLLAG) and 23–43 (IIGGQTGMIIAFFFAMAMNFF). His-130 contacts Zn(2+). Glu-131 is a catalytic residue. His-134 contacts Zn(2+). 2 helical membrane-spanning segments follow: residues 140 to 160 (ILISSIAATIGGAISMLAEMA) and 175 to 195 (IGGLIGSLLLFILAPIAAMII). Glu-204 contacts Zn(2+).

Belongs to the peptidase M48B family. Zn(2+) serves as cofactor.

The protein resides in the cell inner membrane. In Persephonella marina (strain DSM 14350 / EX-H1), this protein is Protease HtpX homolog.